A 122-amino-acid polypeptide reads, in one-letter code: Small ribosomal subunit protein uS13 (122 aa).

Residues Gly95–Lys122 are disordered.

The protein belongs to the universal ribosomal protein uS13 family. Part of the 30S ribosomal subunit. Forms a loose heterodimer with protein S19. Forms two bridges to the 50S subunit in the 70S ribosome.

Functionally, located at the top of the head of the 30S subunit, it contacts several helices of the 16S rRNA. In the 70S ribosome it contacts the 23S rRNA (bridge B1a) and protein L5 of the 50S subunit (bridge B1b), connecting the 2 subunits; these bridges are implicated in subunit movement. Contacts the tRNAs in the A and P-sites. The sequence is that of Small ribosomal subunit protein uS13 from Nitratidesulfovibrio vulgaris (strain ATCC 29579 / DSM 644 / CCUG 34227 / NCIMB 8303 / VKM B-1760 / Hildenborough) (Desulfovibrio vulgaris).